The following is a 196-amino-acid chain: dCTP deaminase, dUMP-forming (196 aa).

DCTP is bound by residues 101–106, D119, 127–129, Q148, Y162, and Q174; these read KSSLGR and TLE. E129 acts as the Proton donor/acceptor in catalysis.

It belongs to the dCTP deaminase family. In terms of assembly, homotrimer.

It carries out the reaction dCTP + 2 H2O = dUMP + NH4(+) + diphosphate. It participates in pyrimidine metabolism; dUMP biosynthesis; dUMP from dCTP: step 1/1. Functionally, bifunctional enzyme that catalyzes both the deamination of dCTP to dUTP and the hydrolysis of dUTP to dUMP without releasing the toxic dUTP intermediate. This is dCTP deaminase, dUMP-forming from Tropheryma whipplei (strain TW08/27) (Whipple's bacillus).